We begin with the raw amino-acid sequence, 113 residues long: UPF0482 protein YnfB (113 aa).

A signal peptide spans 1-28 (MKITLSKRIGLLAFLLPCALALSTTVHA).

This sequence belongs to the UPF0482 family.

This is UPF0482 protein YnfB from Shigella flexneri serotype 5b (strain 8401).